Here is a 226-residue protein sequence, read N- to C-terminus: MRGGEQDLRAGLKALQLELTDSQVGQLLDYQDLIGKWTKVYNLTAVRDPVEMMTHHLLDSLAAVPPLRRHLRKTGQEQGACLLDVGSGAGLPGVVIAICCPEVAVTCVDTVAKKAAFIKQAALALKLPNLSGLHARVETITTLFDVICSRAFASLADFTQWSGDALASHGVWMAMKGKQPAEELASLPPTVEVFHVEQLQVPGLDAERCIVWMRCKSAAAGLDQQG.

S-adenosyl-L-methionine contacts are provided by residues Gly-86, Leu-91, 137–138 (VE), and Arg-150.

It belongs to the methyltransferase superfamily. RNA methyltransferase RsmG family.

It localises to the cytoplasm. It catalyses the reaction guanosine(527) in 16S rRNA + S-adenosyl-L-methionine = N(7)-methylguanosine(527) in 16S rRNA + S-adenosyl-L-homocysteine. In terms of biological role, specifically methylates the N7 position of guanine in position 527 of 16S rRNA. The sequence is that of Ribosomal RNA small subunit methyltransferase G from Polaromonas sp. (strain JS666 / ATCC BAA-500).